A 630-amino-acid chain; its full sequence is Zinc finger protein 37 homolog (630 aa).

Disordered regions lie at residues 1-45 (MSVS…SAAE), 77-172 (KPDM…PSKK), and 193-285 (HSRN…KHEK). A compositionally biased stretch (basic and acidic residues) spans 14–30 (ETVDRRRSAETTKEAGR). The 72-residue stretch at 32–103 (LEMAVSEPEA…KGKRPSQGCP (72 aa)) folds into the KRAB domain. Position 42 is a phosphoserine (S42). Over residues 110 to 122 (KQKETDGKVQKDD) the composition is skewed to basic and acidic residues. Basic residues predominate over residues 161–172 (NNLHKKHVPSKK). Over residues 193–206 (HSRNCVKRKSDAAK) the composition is skewed to basic and acidic residues. Positions 221–231 (KGKKQTGKKHE) are enriched in basic residues. 2 stretches are compositionally biased toward basic and acidic residues: residues 232–243 (KLSSHSSSDKCN) and 260–274 (IKQDKIQTGEKHEKS). 2 consecutive C2H2-type zinc fingers follow at residues 293 to 315 (YECNQCGKVLSHKQGLIDHQRVH) and 321 to 343 (YECNECGIAFSQKSHLVVHQRTH). The C2H2-type 3; atypical zinc-finger motif lies at 349–367 (YECIQCGKAHGHKHALTDH). 9 C2H2-type zinc fingers span residues 377–399 (YECAECGKTFRHSSNLIQHVRSH), 405–427 (YECKECGKSFRYNSSLTEHVRTH), 433–455 (YECNECGKAFKYSSSLTKHMRIH), 461–483 (FECNECGKAFSKKSHLIIHQRTH), 489–511 (YKCNECGKAFGHSSSLTYHMRTH), 517–539 (FECNQCGKGFKQIEGLTQHQRVH), 545–567 (YECNECGKAFSQKSHLIVHQRTH), 573–595 (YECNECEKAFNAKSQLVIHQRSH), and 601–623 (YECNECGKTFKQNASLTKHVKTH).

This sequence belongs to the krueppel C2H2-type zinc-finger protein family. In terms of tissue distribution, expressed at low level in several tissues including fetal cartilage.

The protein localises to the nucleus. May be involved in transcriptional regulation. This chain is Zinc finger protein 37 homolog (ZFP37), found in Homo sapiens (Human).